Reading from the N-terminus, the 195-residue chain is Pyridoxal 5'-phosphate synthase subunit PdxT (195 aa).

46–48 (GES) is an L-glutamine binding site. Cys-78 serves as the catalytic Nucleophile. L-glutamine is bound by residues Arg-105 and 133-134 (IR). Active-site charge relay system residues include His-169 and Glu-171.

The protein belongs to the glutaminase PdxT/SNO family. In the presence of PdxS, forms a dodecamer of heterodimers. Only shows activity in the heterodimer.

It carries out the reaction aldehydo-D-ribose 5-phosphate + D-glyceraldehyde 3-phosphate + L-glutamine = pyridoxal 5'-phosphate + L-glutamate + phosphate + 3 H2O + H(+). It catalyses the reaction L-glutamine + H2O = L-glutamate + NH4(+). It functions in the pathway cofactor biosynthesis; pyridoxal 5'-phosphate biosynthesis. Functionally, catalyzes the hydrolysis of glutamine to glutamate and ammonia as part of the biosynthesis of pyridoxal 5'-phosphate. The resulting ammonia molecule is channeled to the active site of PdxS. This chain is Pyridoxal 5'-phosphate synthase subunit PdxT, found in Geobacillus thermodenitrificans (strain NG80-2).